Reading from the N-terminus, the 175-residue chain is ATP synthase subunit delta (175 aa).

The protein belongs to the ATPase delta chain family. As to quaternary structure, F-type ATPases have 2 components, F(1) - the catalytic core - and F(0) - the membrane proton channel. F(1) has five subunits: alpha(3), beta(3), gamma(1), delta(1), epsilon(1). F(0) has three main subunits: a(1), b(2) and c(10-14). The alpha and beta chains form an alternating ring which encloses part of the gamma chain. F(1) is attached to F(0) by a central stalk formed by the gamma and epsilon chains, while a peripheral stalk is formed by the delta and b chains.

It localises to the cell membrane. In terms of biological role, f(1)F(0) ATP synthase produces ATP from ADP in the presence of a proton or sodium gradient. F-type ATPases consist of two structural domains, F(1) containing the extramembraneous catalytic core and F(0) containing the membrane proton channel, linked together by a central stalk and a peripheral stalk. During catalysis, ATP synthesis in the catalytic domain of F(1) is coupled via a rotary mechanism of the central stalk subunits to proton translocation. Functionally, this protein is part of the stalk that links CF(0) to CF(1). It either transmits conformational changes from CF(0) to CF(1) or is implicated in proton conduction. This chain is ATP synthase subunit delta, found in Lactococcus lactis subsp. cremoris (strain MG1363).